The sequence spans 363 residues: RNA polymerase II holoenzyme cyclin-like subunit (363 aa).

The Cyclin N-terminal domain maps to 53–143; it reads YQMLRLAKNL…IGECEFWLIS (91 aa). Residues 252–312 are disordered; sequence TPGGSGSPAM…SPQKEKSKLQ (61 aa). The span at 265–276 shows a compositional bias: polar residues; sequence IQQNPPNQAYQL. Residues 277–298 are compositionally biased toward low complexity; it reads TPQQQEMFRQQQMQQQNRQPET. Positions 299 to 310 are enriched in basic and acidic residues; it reads QAKDSPQKEKSK.

Belongs to the cyclin family. Cyclin C subfamily. As to quaternary structure, component of the SRB8-11 complex, a regulatory module of the Mediator complex.

The protein localises to the nucleus. Functionally, component of the SRB8-11 complex. The SRB8-11 complex is a regulatory module of the Mediator complex which is itself involved in regulation of basal and activated RNA polymerase II-dependent transcription. The SRB8-11 complex may be involved in the transcriptional repression of a subset of genes regulated by Mediator. It may inhibit the association of the Mediator complex with RNA polymerase II to form the holoenzyme complex. The SRB8-11 complex phosphorylates the C-terminal domain (CTD) of the largest subunit of RNA polymerase II. In Pyricularia oryzae (strain 70-15 / ATCC MYA-4617 / FGSC 8958) (Rice blast fungus), this protein is RNA polymerase II holoenzyme cyclin-like subunit (SSN8).